The following is a 151-amino-acid chain: SsrA-binding protein (151 aa).

Belongs to the SmpB family.

Its subcellular location is the cytoplasm. In terms of biological role, required for rescue of stalled ribosomes mediated by trans-translation. Binds to transfer-messenger RNA (tmRNA), required for stable association of tmRNA with ribosomes. tmRNA and SmpB together mimic tRNA shape, replacing the anticodon stem-loop with SmpB. tmRNA is encoded by the ssrA gene; the 2 termini fold to resemble tRNA(Ala) and it encodes a 'tag peptide', a short internal open reading frame. During trans-translation Ala-aminoacylated tmRNA acts like a tRNA, entering the A-site of stalled ribosomes, displacing the stalled mRNA. The ribosome then switches to translate the ORF on the tmRNA; the nascent peptide is terminated with the 'tag peptide' encoded by the tmRNA and targeted for degradation. The ribosome is freed to recommence translation, which seems to be the essential function of trans-translation. This Campylobacter fetus subsp. fetus (strain 82-40) protein is SsrA-binding protein.